The chain runs to 189 residues: Cancer/testis antigen family 45 member A2 (189 aa).

This sequence belongs to the CT45 family. In terms of tissue distribution, testis specific. Expressed in cancer cell lines.

This is Cancer/testis antigen family 45 member A2 from Homo sapiens (Human).